The chain runs to 232 residues: N-(5'-phosphoribosyl)anthranilate isomerase (232 aa).

This sequence belongs to the TrpF family.

The catalysed reaction is N-(5-phospho-beta-D-ribosyl)anthranilate = 1-(2-carboxyphenylamino)-1-deoxy-D-ribulose 5-phosphate. It participates in amino-acid biosynthesis; L-tryptophan biosynthesis; L-tryptophan from chorismate: step 3/5. The chain is N-(5'-phosphoribosyl)anthranilate isomerase (TRP1) from Lipomyces starkeyi (Oleaginous yeast).